Here is a 351-residue protein sequence, read N- to C-terminus: Methionine import ATP-binding protein MetN (351 aa).

The region spanning 4 to 249 (VQLDHVSVTF…PKAELTQKFV (246 aa)) is the ABC transporter domain. 41 to 48 (GFSGAGKS) is a binding site for ATP.

This sequence belongs to the ABC transporter superfamily. Methionine importer (TC 3.A.1.24) family. As to quaternary structure, the complex is composed of two ATP-binding proteins (MetN), two transmembrane proteins (MetI) and a solute-binding protein (MetQ).

It localises to the cell membrane. The enzyme catalyses L-methionine(out) + ATP + H2O = L-methionine(in) + ADP + phosphate + H(+). It catalyses the reaction D-methionine(out) + ATP + H2O = D-methionine(in) + ADP + phosphate + H(+). Its function is as follows. Part of the ABC transporter complex MetNIQ involved in methionine import. Responsible for energy coupling to the transport system. The chain is Methionine import ATP-binding protein MetN from Lactobacillus delbrueckii subsp. bulgaricus (strain ATCC 11842 / DSM 20081 / BCRC 10696 / JCM 1002 / NBRC 13953 / NCIMB 11778 / NCTC 12712 / WDCM 00102 / Lb 14).